The following is a 462-amino-acid chain: Argininosuccinate lyase (462 aa).

The protein belongs to the lyase 1 family. Argininosuccinate lyase subfamily.

It is found in the cytoplasm. The catalysed reaction is 2-(N(omega)-L-arginino)succinate = fumarate + L-arginine. The protein operates within amino-acid biosynthesis; L-arginine biosynthesis; L-arginine from L-ornithine and carbamoyl phosphate: step 3/3. In Streptococcus agalactiae serotype V (strain ATCC BAA-611 / 2603 V/R), this protein is Argininosuccinate lyase.